Reading from the N-terminus, the 1726-residue chain is MLVLGCLQCFTSAWGFASRRICHSSSATPGQHSVGLGHGYQHGAQSWAERFLLRYKGLLWFVGSRAHSGGEETNGKLQAGGCYSYWRGSLGIYFERGKEHGEPLIITKVEDGNKAADILMAGDEIVNINDQQLLGYRQEAICLVKGSHKILKMIVKRRNDISYRPHSWHSNKLIESAMDTVTPQMSNASPFWNARYRSSSSSHDLSNPWDQTSLQRNSGHFSSMGSMDSIDQTYQFGRLSSAKSNNSIDYVGSQNKRDSAYGSFSASFSTPDHTLSKTASASTENILYKNNEWDNTKLGYGKTSPSMNEVRRSADRQVLQSTSINETSKIQRTEDNTEPRYSGRSNFGPVWNIPDKKKTASPPPPPPPQRSDSYAVTKIHEKPTNLMHLDASSTQHFNVANRSQAKPDWSLEISEQQRPIRAHDRTVADTRRTSNSSYHAGLNADQGLSPYKDKYPSNLPNVSRIQASLSTNDVRFAQPAYNYHHQRQYSDESTLFQSTRTSAQHKSQQQPMKYESSVNQVPSDLTYVYHPHQFRAPATSAGFSSGKQNVENNGQNHFHVVSIKHPQGNTTHHQFKEEENYAPEVNSGRKSVQPENTVISIEIPAYSLPQESFEPSQINCEKNYLKISEKKDNYLGNNEQIINKTTGYSEEKCNDRFSQLDHSEKGSYRSSQDYSWRKEENKITPLVTPMLHSLAQEGRNRSESFPDTGNEKLSFPDAGKQSRRSDRFATTLRNEIQQRRARLQKSKSTAALTESNETETSDNWKQDSLESMSPTSEGSFSSTYRSHLQEAQARVLRATSFKRRDLDTGISDHLSLFQDRNMQISSFSGLSLDPVQPKKNTAVNSSQNVSRIGARKRFTTQQKLMSYSEPEKINEVGVEDQYNFRTENSTKRTVGSFADRWKFFEETSKCAQPKVPPKVVSSSQSEETSEIAINRDYAKSSEGQESKRALAVSGQNPADENGFPDKVTTERRQRLGTFAEYEASWKEQKTQLERKNSGRCHSADNILDADLEQNPKAQYIHERSKSSPTTDFYAQAAAVESKQQSESVRRDTENSNSTHCRSSTGDSPTRTVEAGDQCGATNEQEVLTCNTKWKPHDKSFPIPETSNESQQSRARSGTLPNDYRFAHENVNQGNRDISFSAVPISEACPDFSNADSDQLQDHPSVFKKRSAAPQRPPPPKLENKYWRQNGSSSSLATSSESLLTAQARRAQSYSPSSQDTFPPQSLQKQSPSTYPDKNPSIHIYDYQLSVPPENDRYHLEKKYFESELSSKSHLQIPGMEPSRSPSPQFAPQKLTDKPPLLVPEENLSRIERVIDNTTVKMVPIKIVHSETHAEKESRHNLLSAIEPTALPTGLAKDQLKTLSTSEQSYSRFCAYTRQESREEEESRVTDLYSCQRNAEDDNENDVSSLAPSNAKSKDAIYADLKSEELVREIVDKDKSLADILDPNAKMRTTMDLMEGIFPKDEHLLEEAQQRRKHLPKIPSPRSTDDKKDEQNVPSAVSLTTSSTYYSTSAAKAELLIKMKDMQEQQHIAENSEDELGQNLSEKKQELIDSISKKLQVLRDAKETLLEDVQCNNALGEEVEIIVKEVCKPNEFDKFRMFIGDLEKIVNLLLSLSGRLARVENALNNLDETVSPEERKTLLEKRKLLTRQHEDAKELKENLDRRERTVYEILANYLNEENLADYEHFVKMKSALILEQRELEDKIKLRESQLKCLTDSLPLDRIK.

A PDZ domain is found at 79–159; the sequence is AGGCYSYWRG…ILKMIVKRRN (81 aa). Disordered stretches follow at residues 294-373, 425-451, 657-676, and 697-785; these read DNTK…RSDS, RTVA…LSPY, FSQL…DYSW, and EGRN…STYR. The span at 318-328 shows a compositional bias: polar residues; the sequence is VLQSTSINETS. The span at 329–338 shows a compositional bias: basic and acidic residues; it reads KIQRTEDNTE. Residues 657-667 show a composition bias toward basic and acidic residues; that stretch reads FSQLDHSEKGS. Polar residues-rich tracts occupy residues 746 to 755 and 769 to 785; these read SKSTAALTES and LESM…STYR. Residues 788 to 877 form the ASD1 domain; sequence LQEAQARVLR…SEPEKINEVG (90 aa). Disordered regions lie at residues 913–968, 1007–1080, 1092–1120, 1166–1240, 1269–1299, and 1471–1499; these read PKVP…DKVT, LDAD…QCGA, KWKP…GTLP, FKKR…KNPS, SSKS…DKPP, and AQQR…VPSA. Residues 917-926 are compositionally biased toward low complexity; the sequence is PKVVSSSQSE. Residues 936 to 948 show a composition bias toward basic and acidic residues; sequence DYAKSSEGQESKR. Polar residues-rich tracts occupy residues 1054–1070 and 1104–1119; these read NSNS…SPTR and ETSN…SGTL. The span at 1191 to 1205 shows a compositional bias: low complexity; sequence SSSSLATSSESLLTA. Residues 1209–1235 show a composition bias toward polar residues; the sequence is RAQSYSPSSQDTFPPQSLQKQSPSTYP. One can recognise an ASD2 domain in the interval 1427-1721; the sequence is EELVREIVDK…QLKCLTDSLP (295 aa).

It belongs to the shroom family. In terms of assembly, interacts with F-actin.

Its subcellular location is the apical cell membrane. It is found in the cell junction. It localises to the tight junction. The protein localises to the cytoplasm. The protein resides in the cytoskeleton. Its function is as follows. May be involved in endothelial cell morphology changes during cell spreading. Required for eye pigmentation. In the retinal pigment epithelium, regulates the biogenesis of melanosomes and promotes their association with the apical cell surface by inducing gamma-tubulin redistribution. This Xenopus tropicalis (Western clawed frog) protein is Protein Shroom2 (shroom2).